A 191-amino-acid polypeptide reads, in one-letter code: Adenylate kinase (191 aa).

9–17 (GVPGVGATT) contributes to the ATP binding site.

The protein belongs to the archaeal adenylate kinase family.

It is found in the cytoplasm. The enzyme catalyses AMP + ATP = 2 ADP. This chain is Adenylate kinase, found in Methanopyrus kandleri (strain AV19 / DSM 6324 / JCM 9639 / NBRC 100938).